A 178-amino-acid polypeptide reads, in one-letter code: Ribose 1,5-bisphosphate phosphokinase PhnN (178 aa).

9-16 contributes to the ATP binding site; sequence GPSGSGKD.

The protein belongs to the ribose 1,5-bisphosphokinase family.

The enzyme catalyses alpha-D-ribose 1,5-bisphosphate + ATP = 5-phospho-alpha-D-ribose 1-diphosphate + ADP. Its pathway is metabolic intermediate biosynthesis; 5-phospho-alpha-D-ribose 1-diphosphate biosynthesis; 5-phospho-alpha-D-ribose 1-diphosphate from D-ribose 5-phosphate (route II): step 3/3. In terms of biological role, catalyzes the phosphorylation of ribose 1,5-bisphosphate to 5-phospho-D-ribosyl alpha-1-diphosphate (PRPP). This Pantoea vagans (strain C9-1) (Pantoea agglomerans (strain C9-1)) protein is Ribose 1,5-bisphosphate phosphokinase PhnN.